Reading from the N-terminus, the 441-residue chain is Endothelin receptor type B (441 aa).

Positions 1-26 (MQPLPSLCGRALVALILACGVAGIQA) are cleaved as a signal peptide. The Extracellular segment spans residues 27-100 (EEREFPPAGA…GPIEIKETFK (74 aa)). Residues 30-87 (EFPPAGATQPLPGTGEMMETPTETSWPGRSNASDPRSSATPQIPRGGRMAGIPPRTPP) are disordered. Low complexity predominate over residues 41 to 53 (PGTGEMMETPTET). The segment covering 54–70 (SWPGRSNASDPRSSATP) has biased composition (polar residues). The helical transmembrane segment at 101–125 (YINTVVSCLVFVLGIIGNSTLLRII) threads the bilayer. Residues 126–136 (YKNKCMRNGPN) lie on the Cytoplasmic side of the membrane. A helical membrane pass occupies residues 137 to 162 (ILIASLALGDLLHIIIDIPINTYKLL). The Extracellular segment spans residues 163–174 (AKDWPFGVEMCK). An intrachain disulfide couples Cys-173 to Cys-254. A helical transmembrane segment spans residues 175 to 196 (LVPFIQKASVGITVLSLCALSI). Topologically, residues 197 to 217 (DRYRAVASWSRIKGIGVPKWT) are cytoplasmic. The helical transmembrane segment at 218–242 (AVEIVLIWVVSVVLAVPEAVGFDII) threads the bilayer. Over 243-270 (TSDHIGNKLRICLLHPTQKTAFMQFYKT) the chain is Extracellular. A helical transmembrane segment spans residues 271-295 (AKDWWLFSFYFCLPLAITALFYTLM). Topologically, residues 296 to 323 (TCEMLRKKSGMQIALNDHLKQRREVAKT) are cytoplasmic. Ser-304 carries the phosphoserine modification. The chain crosses the membrane as a helical span at residues 324–349 (VFCLVLVFALCWLPLHLSRILKLTLY). Residues 350–361 (DQHDPRRCEFLS) lie on the Extracellular side of the membrane. A helical membrane pass occupies residues 362-388 (FLLVLDYIGINMASLNSCINPIALYLV). Over 389-441 (SKRFKNCFKSCLCCWCQSFEEKQSLEEKQSCLKFKANDHGYDNFRSSNKYSSS) the chain is Cytoplasmic. 2 S-palmitoyl cysteine lipidation sites follow: Cys-402 and Cys-404. 3 positions are modified to phosphoserine: Ser-418, Ser-434, and Ser-435. Phosphotyrosine is present on Tyr-438. Phosphoserine is present on residues Ser-439, Ser-440, and Ser-441.

The protein belongs to the G-protein coupled receptor 1 family. Endothelin receptor subfamily. EDNRB sub-subfamily. Post-translationally, it is not sure whether phosphorylation is on Ser-434 or Ser-435.

It localises to the cell membrane. Non-specific receptor for endothelin 1, 2, and 3. Mediates its action by association with G proteins that activate a phosphatidylinositol-calcium second messenger system. This Bos taurus (Bovine) protein is Endothelin receptor type B (EDNRB).